The primary structure comprises 529 residues: MLPLLLPLPVTPPPPLPSPTLTLAPASAPRRRLVLLAAAAPHHHHHHRRRRVYRRQRAAPTQTRAPRRTLSASNAARGEEDLEEAIYEFMRRSDKPGAFPTRAELVAAGRADLAAAVDACGGWLSLGWSSGGAEAGRASSSVGVHPDYPPEAGAAAAAGGASDLAQGAVWASSREAEASPSGRQPETEEEETETKFGTGLDGMLTRLQRERERVRPPLPRSSDGAGGERDNVALMGQSGAPSHSATGGRYTPKVPDNGNIHSYHPQNGALEHNKSSKSLTNDAWRTWSLDKGGFSDFQAAEIHSTNSRKSFRHDGLDILAQDDVHGPSNGVAVHDYDINDVDSERDDIHARLQNLELDLTAALHTLRSRFDKVISDMSEGDGAKAPNGLSDDWEFEETKVMQAQEELRSIRAKIAVLEGKMALEIIEKNKIIEEKQRRLDEAEKALSELRTVYIVWSNPASEVLLTGSFDGWTSQRRMERSERGTFSLNLRLYPGRYEIKFIVDGVWRNDPLRPLVSNNGHENNLLTVT.

3 disordered regions span residues 1-22 (MLPL…PTLT), 39-77 (AAPH…NAAR), and 166-275 (QGAV…HNKS). A chloroplast-targeting transit peptide spans 1-71 (MLPLLLPLPV…QTRAPRRTLS (71 aa)). A compositionally biased stretch (pro residues) spans 9–18 (PVTPPPPLPS). Over residues 41–57 (PHHHHHHRRRRVYRRQR) the composition is skewed to basic residues. A coiled-coil region spans residues 400–452 (VMQAQEELRSIRAKIAVLEGKMALEIIEKNKIIEEKQRRLDEAEKALSELRTV).

Interacts with SKIPA. Interacts with ISA1. In terms of tissue distribution, expressed in leaves, stems and panicles. Expressed at lower levels in roots and developing seeds.

It is found in the plastid. The protein resides in the chloroplast. Functionally, involved in compound starch granule formation and starch synthesis in endosperm. May act as a regulatory scaffolding protein and affect starch synthesis and compound starch granule formation through direct interaction with isoamylase 1 (ISA1). Binds starch, amylopectin and amylose through its C-terminal carbohydrate-binding domain (CBM) in vitro. In Oryza sativa subsp. japonica (Rice), this protein is Protein FLOURY ENDOSPERM 6, chloroplastic.